A 142-amino-acid polypeptide reads, in one-letter code: Hemoglobin subunit alpha-A (142 aa).

Positions 2–142 (VLSANDKSNV…VGTVLTAKYR (141 aa)) constitute a Globin domain. Residue His-59 participates in O2 binding. Heme b is bound at residue His-88.

It belongs to the globin family. Heterotetramer of two alpha chains and two beta chains. In terms of tissue distribution, red blood cells.

Functionally, involved in oxygen transport from the lung to the various peripheral tissues. This chain is Hemoglobin subunit alpha-A (HBAA), found in Columba livia (Rock dove).